The sequence spans 555 residues: Solute carrier family 22 member 2 (555 aa).

The Cytoplasmic segment spans residues 1-21 (MSTVDDILEHIGEFHLFQKQT). A helical transmembrane segment spans residues 22-42 (FFLLALLSGAFTPIYVGIVFL). At 43 to 150 (GFTPDHHCWS…LVCAHSWMLD (108 aa)) the chain is on the extracellular side. Asn71 is a glycosylation site (N-linked (GlcNAc...) asparagine). Residues 151 to 171 (LFQSVVNVGFFIGAMMIGYLA) traverse the membrane as a helical segment. Topologically, residues 172 to 177 (DRFGRK) are cytoplasmic. The helical transmembrane segment at 178-198 (FCLLVTILINAISGALMAISP) threads the bilayer. Residues 199-210 (NYAWMLVFRFLQ) are Extracellular-facing. The chain crosses the membrane as a helical span at residues 211–231 (GLVSKAGWLIGYILITEFVGL). Residues 232–238 (GYRRMVG) are Cytoplasmic-facing. A helical transmembrane segment spans residues 239–259 (ICYQIAFTVGLLILAGVAYVI). The Extracellular portion of the chain corresponds to 260 to 263 (PNWR). Residues 264–284 (WLQFAVTLPNFCFLLYFWCIP) traverse the membrane as a helical segment. A Proline-rich sequence motif is present at residues 284–288 (PESPR). At 285-348 (ESPRWLISQN…VRTPQIRKHT (64 aa)) the chain is on the cytoplasmic side. A helical transmembrane segment spans residues 349-369 (LILMYNWFTSSVLYQGLIMHM). At 370–375 (GLAGDN) the chain is on the extracellular side. Residues 376-396 (IYLDFFYSALVEFPAAFIIIL) form a helical membrane-spanning segment. The Cytoplasmic portion of the chain corresponds to 397–404 (TIDRVGRR). Residues 405–425 (YPWAVSNMVAGAACLASVFIP) traverse the membrane as a helical segment. The Extracellular segment spans residues 426–432 (DDLQWLK). Residues 433–453 (ITIACLGRMGITMAYEMVCLV) traverse the membrane as a helical segment. Residues 454 to 464 (NAELYPTYIRN) are Cytoplasmic-facing. Residues 465 to 485 (LGVLVCSSMCDIGGIITPFLV) traverse the membrane as a helical segment. Residues 486–494 (YRLTDIWME) are Extracellular-facing. Residues 495–515 (FPLVVFAVVGLVAGALVLLLP) form a helical membrane-spanning segment. At 516-555 (ETKGKALPETIEDAENMQRPRKKKEKRIYLQVKQADRPLS) the chain is on the cytoplasmic side.

It belongs to the major facilitator (TC 2.A.1) superfamily. Organic cation transporter (TC 2.A.1.19) family. In terms of processing, tyrosine phosphorylated. As to expression, expressed in the kidney, in the proximal tubules of cortex and of the outer medulla. In brain, highly expressed predominantly in regions located at the brain-cerebrospinal fluid border, in the leptomeninges, in the choroid plexus and in a layer boarding the third ventricle. In brain, also observed in the granular cell layer of the cerebellum and in the granular layer and pyramidal cells of the hippocampus in the CA1-CA3 regions. Expressed in tracheal and bronchial ciliated epithelium in the respiratory tract. Expression is greater in the kidney of male than of female.

It is found in the basolateral cell membrane. The protein localises to the basal cell membrane. Its subcellular location is the apical cell membrane. It carries out the reaction (R)-noradrenaline(out) = (R)-noradrenaline(in). It catalyses the reaction (R)-adrenaline(out) = (R)-adrenaline(in). The enzyme catalyses serotonin(out) = serotonin(in). The catalysed reaction is dopamine(out) = dopamine(in). It carries out the reaction histamine(out) = histamine(in). It catalyses the reaction thiamine(in) = thiamine(out). The enzyme catalyses creatinine(in) = creatinine(out). The catalysed reaction is 1-methylnicotinamide(out) = 1-methylnicotinamide(in). It carries out the reaction guanidine(out) = guanidine(in). It catalyses the reaction choline(out) = choline(in). The enzyme catalyses agmatine(out) = agmatine(in). The catalysed reaction is putrescine(out) = putrescine(in). It carries out the reaction spermidine(in) = spermidine(out). It catalyses the reaction tyramine(in) = tyramine(out). The enzyme catalyses L-histidyl-L-proline diketopiperazine(in) = L-histidyl-L-proline diketopiperazine(out). The catalysed reaction is (R)-salsolinol(in) = (R)-salsolinol(out). It carries out the reaction N-methyl-(R)-salsolinol(in) = N-methyl-(R)-salsolinol(out). It catalyses the reaction acetylcholine(in) = acetylcholine(out). The enzyme catalyses prostaglandin F2alpha(out) = prostaglandin F2alpha(in). The catalysed reaction is prostaglandin E2(out) = prostaglandin E2(in). Tyrosine phosphorylation of the transporter leads to activation of the transport activity. Inhibited by cGMP, most likely through a cGMP-binding protein that interacts with OCT2. Functionally, electrogenic voltage-dependent transporter that mediates the transport of a variety of organic cations such as endogenous bioactive amines, cationic drugs and xenobiotics. Functions as a Na(+)-independent, bidirectional uniporter. Cation cellular uptake or release is driven by the electrochemical potential, i.e. membrane potential and concentration gradient. However, may also engage electroneutral cation exchange when saturating concentrations of cation substrates are reached. Predominantly expressed at the basolateral membrane of hepatocytes and proximal tubules and involved in the uptake and disposition of cationic compounds by hepatic and renal clearance from the blood flow. Implicated in monoamine neurotransmitters uptake such as histamine, dopamine, adrenaline/epinephrine, noradrenaline/norepinephrine, serotonin and tyramine, thereby supporting a physiological role in the central nervous system by regulating interstitial concentrations of neurotransmitters. Also capable of transporting dopaminergic neuromodulators cyclo(his-pro), salsolinol and N-methyl-salsolinol, thereby involved in the maintenance of dopaminergic cell integrity in the central nervous system. Mediates the bidirectional transport of acetylcholine (ACh) at the apical membrane of ciliated cell in airway epithelium, thereby playing a role in luminal release of ACh from bronchial epithelium. Also transports guanidine and endogenous monoamines such as vitamin B1/thiamine, creatinine and N-1-methylnicotinamide (NMN). Mediates the uptake and efflux of quaternary ammonium compound choline. Mediates the bidirectional transport of polyamine agmatine and the uptake of polyamine putrescine. Able to transport non-amine endogenous compounds such as prostaglandin E2 (PGE2) and prostaglandin F2-alpha (PGF2-alpha). Also involved in the uptake of xenobiotic 4-(4-(dimethylamino)styryl)-N-methylpyridinium (ASP). May contribute to regulate the transport of organic compounds in testis across the blood-testis-barrier. This Rattus norvegicus (Rat) protein is Solute carrier family 22 member 2.